We begin with the raw amino-acid sequence, 205 residues long: Thiamine-phosphate synthase (205 aa).

4-amino-2-methyl-5-(diphosphooxymethyl)pyrimidine is bound by residues 37 to 41 and asparagine 69; that span reads QVREK. Residues aspartate 70 and aspartate 89 each coordinate Mg(2+). Serine 108 contributes to the 4-amino-2-methyl-5-(diphosphooxymethyl)pyrimidine binding site. A 2-[(2R,5Z)-2-carboxy-4-methylthiazol-5(2H)-ylidene]ethyl phosphate-binding site is contributed by 134–136; it reads TGS. Lysine 137 lines the 4-amino-2-methyl-5-(diphosphooxymethyl)pyrimidine pocket. Residues glycine 165 and 185 to 186 contribute to the 2-[(2R,5Z)-2-carboxy-4-methylthiazol-5(2H)-ylidene]ethyl phosphate site; that span reads IS.

It belongs to the thiamine-phosphate synthase family. Mg(2+) is required as a cofactor.

It carries out the reaction 2-[(2R,5Z)-2-carboxy-4-methylthiazol-5(2H)-ylidene]ethyl phosphate + 4-amino-2-methyl-5-(diphosphooxymethyl)pyrimidine + 2 H(+) = thiamine phosphate + CO2 + diphosphate. The catalysed reaction is 2-(2-carboxy-4-methylthiazol-5-yl)ethyl phosphate + 4-amino-2-methyl-5-(diphosphooxymethyl)pyrimidine + 2 H(+) = thiamine phosphate + CO2 + diphosphate. It catalyses the reaction 4-methyl-5-(2-phosphooxyethyl)-thiazole + 4-amino-2-methyl-5-(diphosphooxymethyl)pyrimidine + H(+) = thiamine phosphate + diphosphate. The protein operates within cofactor biosynthesis; thiamine diphosphate biosynthesis; thiamine phosphate from 4-amino-2-methyl-5-diphosphomethylpyrimidine and 4-methyl-5-(2-phosphoethyl)-thiazole: step 1/1. Functionally, condenses 4-methyl-5-(beta-hydroxyethyl)thiazole monophosphate (THZ-P) and 2-methyl-4-amino-5-hydroxymethyl pyrimidine pyrophosphate (HMP-PP) to form thiamine monophosphate (TMP). In Clostridium botulinum (strain Langeland / NCTC 10281 / Type F), this protein is Thiamine-phosphate synthase.